The following is a 208-amino-acid chain: dITP/XTP pyrophosphatase (208 aa).

11–16 contributes to the substrate binding site; that stretch reads TGNAKK. The active-site Proton acceptor is the aspartate 73. A Mg(2+)-binding site is contributed by aspartate 73. Substrate contacts are provided by residues serine 74, 157–160, lysine 180, and 185–186; these read FGYD and HR.

The protein belongs to the HAM1 NTPase family. As to quaternary structure, homodimer. Mg(2+) is required as a cofactor.

It carries out the reaction XTP + H2O = XMP + diphosphate + H(+). The enzyme catalyses dITP + H2O = dIMP + diphosphate + H(+). It catalyses the reaction ITP + H2O = IMP + diphosphate + H(+). Pyrophosphatase that catalyzes the hydrolysis of nucleoside triphosphates to their monophosphate derivatives, with a high preference for the non-canonical purine nucleotides XTP (xanthosine triphosphate), dITP (deoxyinosine triphosphate) and ITP. Seems to function as a house-cleaning enzyme that removes non-canonical purine nucleotides from the nucleotide pool, thus preventing their incorporation into DNA/RNA and avoiding chromosomal lesions. The chain is dITP/XTP pyrophosphatase from Rhodopirellula baltica (strain DSM 10527 / NCIMB 13988 / SH1).